An 850-amino-acid polypeptide reads, in one-letter code: Penicillin-binding protein 1A (850 aa).

The Cytoplasmic portion of the chain corresponds to 1–5 (MKFVK). Residues 6–26 (YFLILAVCCILLGAGSIYGLY) traverse the membrane as a helical; Signal-anchor for type II membrane protein segment. At 27–850 (RYIEPQLPDV…IDNGEAQELF (824 aa)) the chain is on the periplasmic side. The tract at residues 48 to 216 (MQIYSADGEL…STFNPLYSMD (169 aa)) is transglycosylase. Residue Glu86 is the Proton donor; for transglycosylase activity of the active site. Residues 400-710 (DVLQTGQQIW…GWRAGRDLQR (311 aa)) are transpeptidase. The Acyl-ester intermediate; for transpeptidase activity role is filled by Ser465.

This sequence in the N-terminal section; belongs to the glycosyltransferase 51 family. The protein in the C-terminal section; belongs to the transpeptidase family.

It localises to the cell inner membrane. It catalyses the reaction [GlcNAc-(1-&gt;4)-Mur2Ac(oyl-L-Ala-gamma-D-Glu-L-Lys-D-Ala-D-Ala)](n)-di-trans,octa-cis-undecaprenyl diphosphate + beta-D-GlcNAc-(1-&gt;4)-Mur2Ac(oyl-L-Ala-gamma-D-Glu-L-Lys-D-Ala-D-Ala)-di-trans,octa-cis-undecaprenyl diphosphate = [GlcNAc-(1-&gt;4)-Mur2Ac(oyl-L-Ala-gamma-D-Glu-L-Lys-D-Ala-D-Ala)](n+1)-di-trans,octa-cis-undecaprenyl diphosphate + di-trans,octa-cis-undecaprenyl diphosphate + H(+). The catalysed reaction is Preferential cleavage: (Ac)2-L-Lys-D-Ala-|-D-Ala. Also transpeptidation of peptidyl-alanyl moieties that are N-acyl substituents of D-alanine.. Its pathway is cell wall biogenesis; peptidoglycan biosynthesis. Its function is as follows. Cell wall formation. Synthesis of cross-linked peptidoglycan from the lipid intermediates. The enzyme has a penicillin-insensitive transglycosylase N-terminal domain (formation of linear glycan strands) and a penicillin-sensitive transpeptidase C-terminal domain (cross-linking of the peptide subunits). The protein is Penicillin-binding protein 1A (mrcA) of Escherichia coli (strain K12).